The chain runs to 111 residues: Nucleoid-associated protein CYB_2894 (111 aa).

The protein belongs to the YbaB/EbfC family. As to quaternary structure, homodimer.

The protein resides in the cytoplasm. It is found in the nucleoid. Binds to DNA and alters its conformation. May be involved in regulation of gene expression, nucleoid organization and DNA protection. The polypeptide is Nucleoid-associated protein CYB_2894 (Synechococcus sp. (strain JA-2-3B'a(2-13)) (Cyanobacteria bacterium Yellowstone B-Prime)).